The primary structure comprises 90 residues: Progonadoliberin-3 (90 aa).

A signal peptide spans 1 to 23 (MEANSRVMVRVLLLALVVQVTLS). A Pyrrolidone carboxylic acid modification is found at Gln24. Position 33 is a glycine amide (Gly33). The interval 56-90 (LPEEASAQTQERLRPYNVINDDSSHFDRKKRSPNK) is disordered.

Belongs to the GnRH family.

Its subcellular location is the secreted. In terms of biological role, stimulates the secretion of gonadotropins. The protein is Progonadoliberin-3 (gnrh3) of Dicentrarchus labrax (European seabass).